The chain runs to 2295 residues: MDPEEQELLNDYRYRSYSSVIEKALRNFESSSEWADLISSLGKLNKALQSNLKYSLLPRRLIISKRLAQCLHPALPSGVHLKALETYEIIFKIVGTKWLAKDLFLYSCGLFPLLAYAAMSVRPVLLGLYEKYFLPLQKLLLPSLQAFLVGLLPGLEEGSEIYERTDALLLRLSVVVGREVFYAALWGSVLTSPSIRLPASLFVVNHISRDSPGKEQKCMLGTDYQLTVRSLCASLLDANVLVQRNNLEIILFFFPFYTCLDPEERAIPLLRRDVVHILSAATQTLLRRDMSLNRRLYAWLLGSDIKGNTIVPKSEISNSYEDQCSYFFDKYSKDLLVEALAEILHQKFLDADLEERHHAYLKPFRILVSLLDKPEIGPQVVENLFLEVIRAFYSYCHDVLGSDLKLSYTQSGNPLISTIKENRHASEIVKTVNLLVSSLSSDFLWDYMARRFEACFRPVTQTTAIGEAISPPPTVSELCTLLVFLLDVIPLELYSEVQTQYLPQVLGCLLQPLAEEVEALSLPELTHALKTCFKVLSKVQMPPSYLDLEPSSGNSSPVKGRNSGIAMETEAVVAGDEEPSFPPLKSEDSGIGLSASSPELSEHLRVPRVSAERDDIWKKDGTMQATFLCIQELIANFASKNIFAASLTVSGEENKPEEPPGKGNKGQTQSTEHPGRKSSWDPKPITVPQFKQMLSDLFTVRGSPFKTRSSESLSSVPSSPHRKAATEWGVDQVVVELVGSKEDCREALAAACHLLLDCATFPVYLSEEETEQLCETLFQTPGASDCSFPPWLKSLMTICCCVSDCSLQNIAIATLLEVINHSQSLALVIEDKMKRYKTSGNNPFFGKLQMVTVPPIAPGILKVIAEKTDFYQRVARVLWNQLNKETREHHITCVELFYRLHCLAPTANICEDIICHALLDPDKGTRLEALFRFSVIWHLTREIQGSRVTSHNRSFDRSLFVVLDSLACTDGAISAAAQGWLVRALSLGDVARILEPMLLLLLQPKTQRTSIQCLKQENSAEDLHRWFNRKKPTCKEACGESEPQEGAPEERLPRGQFTTVDREAIWAEVEKEPEKCPPRSDLSEEDLPYYVDLPDRMTSGGGDSSEHTESADTSSGHTDSENTSTFSSPSHDLQDLSHEENCCAPIPIGGRAYSKRAALLAAFQPESPRSNARLSLVRADSDKTQASESFSSDEEADVELQAITTSRLLKQQREKQETVEALFKHILLYLQPYDSQRVLYAFSVLEAVLKTNPKEFIEAVSRTGIDTSSTAHLNLISNLLARHQEALIGQSFYGKLQTQAPNVCPHSLLIELLTYLCLSFLRSYYPCYLKVCHRDILGNRDVQVKSVEVLIRITAQLVSMAKSAEGKNTEFIHSLLQRCKVQEFVLLSLSASMYTSQKRYGLATADRGGRLLAEDSLFEESLINLGQDQIWSEHPLQIELLKLLQALIVLEHHLGQGQEEAETQPALSREWQRALNFQQAIGAMQYVQPHPLTSQGLLVSAVVRGLQPAYGYGMHPAWVSLVTHSLPYFGKSLGWTVTPFVIQICKNLDDLVKQYESESVKFTISTTSKKENISPDYPLTLLEGLTTISHFCLLEQPTQHKKTAAVSDPINLRNAKNAILEELPRIVNTMALIWNVLRKEETQKRPVDLLGATKGSSSVYFKTTKTIRQKILDLLNPLTGHLGVQLIAAVATVWNRKQARRHSKTKMVPVANTSQHTLVDLVCALSTLQTDSVLQLVKEVVKRPAQIKGDEKSPLVDIPVLQFCYAFIQRLSIPDLQEAFPSLLGVLKEAAQLNLAPPGYFLLLSMLNDFVTRTPNLESKKDQKDLQEITQRILEAVGTIAGSSLEQTSWLSRNLEVKAQPQVSLEESDAEDDVHSAAEASTMVSASAPSVYSVQALSLLAEVLASLLDMVYRSDEKEKAVPLISRLLYYVFPYLRNHSAYNAPSFRAGAQLLSSLSGYAYTKRAWKKEVLELFLDPAFFQMDTSCVHWKSVIDHLLTHEKTMFKDLMNMQSSSLKLFSSFEQKAMLLKRQAFAVFSGELDQYHLYLPLIQERLTDNLRVGQTSIVAGQMFLFFRVLLLRISPQHLTSLWPIMVSELIQTFIQLEEDLKEEDESRNSHKSNRIKAPVADGNGSAGRVLSPSDLTMYLSACKFLDTALAFPPDKMPLFQIYRWAFVPEVDTEHPAFLSELEENHQECRPHTVRILELLRSRYGEIGSSDEITRKKEFPLLRQHSVSCIRQLIPFFTTLNCAFKTQSQLPADVPGTAAPECPVTENPRVLRQLEECVEQDFLEHPEC.

Phosphoserine is present on residues S556 and S597. Disordered regions lie at residues A574 to E599, G651 to P684, C1034 to T1059, and D1092 to L1136. Residues A1111–H1131 are compositionally biased toward polar residues. Position 1167 is a phosphoserine (S1167).

This sequence belongs to the DOP1 family. In terms of assembly, homooligomer. Heterotrimer with ATP9A and MON2; this interaction is retromer-independent. Interacts with SNX3. Expressed in liver, heart and brain.

Its subcellular location is the early endosome membrane. It localises to the golgi apparatus membrane. Functionally, may play a role in regulating membrane trafficking of cargo proteins. Together with ATP9A and MON2, regulates SNX3 retromer-mediated endosomal sorting of WLS away from lysosomal degradation. This is Protein DOP1B (Dop1b) from Mus musculus (Mouse).